Consider the following 572-residue polypeptide: Cytochrome P450 monooxygenase xilC (572 aa).

Position 515 (C515) interacts with heme.

It belongs to the cytochrome P450 family. Requires heme as cofactor.

It functions in the pathway secondary metabolite biosynthesis. Functionally, cytochrome P450 monooxygenase; part of the gene cluster that mediates the biosynthesis of the 6-methyl-2-pyrone derivative xylariolide D. XilC hydroxylates the 5-alkyl-6-methyl-2-pyrone backbone called prexylariolide D, produced by the highly reducing polyketide synthase xilA, on its side chain to form xylariolide D. In Penicillium crustosum (Blue mold fungus), this protein is Cytochrome P450 monooxygenase xilC.